The following is a 139-amino-acid chain: Ribonuclease VapC39 (139 aa).

The region spanning 4-133 (LLDVNVLIAL…DAALADSASA (130 aa)) is the PINc domain. 2 residues coordinate Mg(2+): D6 and D106.

This sequence belongs to the PINc/VapC protein family. Mg(2+) serves as cofactor.

Functionally, toxic component of a type II toxin-antitoxin (TA) system. An RNase. Its toxic effect is neutralized by coexpression with cognate antitoxin VapB39. This Mycobacterium tuberculosis (strain CDC 1551 / Oshkosh) protein is Ribonuclease VapC39.